The primary structure comprises 247 residues: Neurotrophic factor BDNF precursor form (247 aa).

The N-terminal stretch at 1–18 (MTILFLTMVISYFGCMKA) is a signal peptide. Positions 19 to 128 (APMKEANIRG…AANMSMRVRR (110 aa)) are excised as a propeptide. An N-linked (GlcNAc...) asparagine glycan is attached at asparagine 121. Cystine bridges form between cysteine 141–cysteine 208, cysteine 186–cysteine 237, and cysteine 196–cysteine 239.

This sequence belongs to the NGF-beta family. Monomers and homodimers. Binds to NTRK2/TRKB. Can form heterodimers with other neurotrophin family members, such as NTF3 and NTF4 (in vitro), but the physiological relevance of this is not clear. BDNF precursor form: interacts with the heterodimer formed by NGFR and SORCS2. N-glycosylated and glycosulfated, contrary to mature BDNF. In terms of processing, mature BDNF is produced by proteolytic removal of the propeptide, catalyzed by a FURIN family member. In addition, the precursor form is proteolytically cleaved within the propeptide, but this is not an obligatory intermediate for the production of mature BDNF. Can be converted into mature BDNF by plasmin (PLG). Detected in blood plasma and in saliva (at protein level). Brain. Highly expressed in hippocampus, amygdala, cerebral cortex and cerebellum. Also expressed in heart, lung, skeletal muscle, testis, prostate and placenta.

It localises to the secreted. Its function is as follows. Important signaling molecule that activates signaling cascades downstream of NTRK2. During development, promotes the survival and differentiation of selected neuronal populations of the peripheral and central nervous systems. Participates in axonal growth, pathfinding and in the modulation of dendritic growth and morphology. Major regulator of synaptic transmission and plasticity at adult synapses in many regions of the CNS. The versatility of BDNF is emphasized by its contribution to a range of adaptive neuronal responses including long-term potentiation (LTP), long-term depression (LTD), certain forms of short-term synaptic plasticity, as well as homeostatic regulation of intrinsic neuronal excitability. In terms of biological role, important signaling molecule that activates signaling cascades downstream of NTRK2. Activates signaling cascades via the heterodimeric receptor formed by NGFR and SORCS2. Signaling via NGFR and SORCS2 plays a role in synaptic plasticity and long-term depression (LTD). Binding to NGFR and SORCS2 promotes neuronal apoptosis. Promotes neuronal growth cone collapse. The protein is Neurotrophic factor BDNF precursor form of Homo sapiens (Human).